The sequence spans 1748 residues: Anaphase-promoting complex subunit 1 (1748 aa).

2 disordered regions span residues 1–24 (MTSK…YTGD) and 1435–1479 (VSGV…DPTA). Residues 1435 to 1450 (VSGVTQVTSNTNTPGN) are compositionally biased toward polar residues. Residues 1451 to 1468 (SDRERVDETAASLDDERS) show a composition bias toward basic and acidic residues. S1462 carries the phosphoserine modification.

This sequence belongs to the APC1 family. As to quaternary structure, the APC/C is composed of at least 13 subunits that stay tightly associated throughout the cell cycle: APC1, APC2, APC4, APC5, APC9, APC11, CDC16, CDC23, CDC26, CDC27, DOC1, MND2 and SWM1. APC1 interacts directly with MND2.

The protein localises to the nucleus. The protein resides in the cytoplasm. It is found in the cytoskeleton. Its subcellular location is the spindle pole. The protein operates within protein modification; protein ubiquitination. Its function is as follows. Component of the anaphase promoting complex/cyclosome (APC/C), a cell cycle-regulated E3 ubiquitin-protein ligase complex that controls progression through mitosis and the G1 phase of the cell cycle. The APC/C is thought to confer substrate specificity and, in the presence of ubiquitin-conjugating E2 enzymes, it catalyzes the formation of protein-ubiquitin conjugates that are subsequently degraded by the 26S proteasome. In early mitosis, the APC/C is activated by CDC20 and targets securin PDS1, the B-type cyclin CLB5, and other anaphase inhibitory proteins for proteolysis, thereby triggering the separation of sister chromatids at the metaphase-to-anaphase transition. In late mitosis and in G1, degradation of CLB5 allows activation of the APC/C by CDH1, which is needed to destroy CDC20 and the B-type cyclin CLB2 to allow exit from mitosis and creating the low CDK state necessary for cytokinesis and for reforming prereplicative complexes in G1 prior to another round of replication. The chain is Anaphase-promoting complex subunit 1 (APC1) from Saccharomyces cerevisiae (strain ATCC 204508 / S288c) (Baker's yeast).